The primary structure comprises 177 residues: N-terminal acetyltransferase A complex catalytic subunit ard1 (177 aa).

The 153-residue stretch at 1 to 153 folds into the N-acetyltransferase domain; sequence MDIRPARISD…DAYAMHKDFS (153 aa).

This sequence belongs to the acetyltransferase family. ARD1 subfamily. In terms of assembly, component of the N-terminal acetyltransferase A (NatA) complex, which is composed of at least ard1 and nat1.

It is found in the cytoplasm. Its subcellular location is the nucleus. The enzyme catalyses N-terminal glycyl-[protein] + acetyl-CoA = N-terminal N(alpha)-acetylglycyl-[protein] + CoA + H(+). It catalyses the reaction N-terminal L-alanyl-[protein] + acetyl-CoA = N-terminal N(alpha)-acetyl-L-alanyl-[protein] + CoA + H(+). It carries out the reaction N-terminal L-seryl-[protein] + acetyl-CoA = N-terminal N(alpha)-acetyl-L-seryl-[protein] + CoA + H(+). The catalysed reaction is N-terminal L-valyl-[protein] + acetyl-CoA = N-terminal N(alpha)-acetyl-L-valyl-[protein] + CoA + H(+). The enzyme catalyses N-terminal L-cysteinyl-[protein] + acetyl-CoA = N-terminal N(alpha)-acetyl-L-cysteinyl-[protein] + CoA + H(+). It catalyses the reaction N-terminal L-threonyl-[protein] + acetyl-CoA = N-terminal N(alpha)-acetyl-L-threonyl-[protein] + CoA + H(+). In terms of biological role, catalytic component of the NatA N-terminal acetyltransferase, which catalyzes acetylation of proteins beginning with Met-Ser, Met-Gly and Met-Ala. N-acetylation plays a role in normal eukaryotic translation and processing, protect against proteolytic degradation and protein turnover. The chain is N-terminal acetyltransferase A complex catalytic subunit ard1 (ard1) from Schizosaccharomyces pombe (strain 972 / ATCC 24843) (Fission yeast).